The chain runs to 287 residues: Pyridoxal kinase PdxY (287 aa).

Substrate is bound by residues Ser10 and 45-46 (TQ). ATP contacts are provided by residues Asp112, Ala144, Glu149, Lys182, and 209-212 (RPLV). Residue Asp224 coordinates substrate.

Belongs to the pyridoxine kinase family. PdxY subfamily. Homodimer. The cofactor is Mg(2+).

The catalysed reaction is pyridoxal + ATP = pyridoxal 5'-phosphate + ADP + H(+). The protein operates within cofactor metabolism; pyridoxal 5'-phosphate salvage; pyridoxal 5'-phosphate from pyridoxal: step 1/1. In terms of biological role, pyridoxal kinase involved in the salvage pathway of pyridoxal 5'-phosphate (PLP). Catalyzes the phosphorylation of pyridoxal to PLP. This Escherichia coli O6:H1 (strain CFT073 / ATCC 700928 / UPEC) protein is Pyridoxal kinase PdxY.